A 64-amino-acid polypeptide reads, in one-letter code: Alpha-toxin Amm5 (64 aa).

In terms of domain architecture, LCN-type CS-alpha/beta spans 2–64; sequence KDGYIIDDLN…VSIKEKGRCN (63 aa). 4 cysteine pairs are disulfide-bonded: C12–C63, C16–C36, C22–C46, and C26–C48. N64 is modified (asparagine amide).

As to expression, expressed by the venom gland.

The protein resides in the secreted. Functionally, alpha toxins bind voltage-independently at site-3 of sodium channels (Nav) and inhibit the inactivation of the activated channels, thereby blocking neuronal transmission. In Androctonus mauritanicus mauritanicus (Scorpion), this protein is Alpha-toxin Amm5.